A 256-amino-acid chain; its full sequence is Alcohol dehydrogenase (256 aa).

Position 12–41 (12–41 (FVAGLGGIGLDTTKELLKRDLKNLVILDRI)) interacts with NAD(+). S140 serves as a coordination point for substrate. Residue Y153 is the Proton acceptor of the active site.

This sequence belongs to the short-chain dehydrogenases/reductases (SDR) family. Homodimer.

The catalysed reaction is a primary alcohol + NAD(+) = an aldehyde + NADH + H(+). It carries out the reaction a secondary alcohol + NAD(+) = a ketone + NADH + H(+). This Drosophila ananassae (Fruit fly) protein is Alcohol dehydrogenase.